The primary structure comprises 179 residues: Large ribosomal subunit protein uL6 (179 aa).

The protein belongs to the universal ribosomal protein uL6 family. Part of the 50S ribosomal subunit.

This protein binds to the 23S rRNA, and is important in its secondary structure. It is located near the subunit interface in the base of the L7/L12 stalk, and near the tRNA binding site of the peptidyltransferase center. This Mycobacterium leprae (strain Br4923) protein is Large ribosomal subunit protein uL6.